The primary structure comprises 66 residues: Clarkitoxin-I-Mdum (66 aa).

Disulfide bonds link Cys-3-Cys-24, Cys-17-Cys-42, Cys-46-Cys-59, and Cys-60-Cys-65.

In terms of tissue distribution, expressed by the venom gland.

It is found in the secreted. In terms of biological role, no toxicity is observed upon intravenous or intracerebroventricular injection into mice. Has no cytotoxic activity towards C2C12 cells at 100 ug/ml. The protein is Clarkitoxin-I-Mdum of Micrurus dumerilii (Coral snake).